The primary structure comprises 81 residues: Neurotoxin LmNaTx11.1 (81 aa).

The first 18 residues, 1–18 (MKIVIIFFIAMMAVGVYS), serve as a signal peptide directing secretion. Residues 19–80 (KDGYLVKKNG…PTYPSSKTCS (62 aa)) enclose the LCN-type CS-alpha/beta domain. 4 cysteine pairs are disulfide-bonded: cysteine 29–cysteine 79, cysteine 33–cysteine 56, cysteine 42–cysteine 61, and cysteine 46–cysteine 63.

The protein belongs to the long (4 C-C) scorpion toxin superfamily. Sodium channel inhibitor family. Beta subfamily. Expressed by the venom gland.

It is found in the secreted. Its function is as follows. Binds voltage-independently at site-4 of sodium channels (Nav) and shift the voltage of activation toward more negative potentials thereby affecting sodium channel activation and promoting spontaneous and repetitive firing. The chain is Neurotoxin LmNaTx11.1 from Lychas mucronatus (Chinese swimming scorpion).